The chain runs to 215 residues: MANRGATRPNGPNTGNKICQFKLVLLGESAVGKSSLVLRFVKGQFHEFQESTIGAAFLTQTVCLDDTTVKFEIWDTAGQERYHSLAPMYYRGAQAAIVVYDITNEESFARAKNWVKELQRQASPNIVIALSGNKADLANKRAVDFQEAQSYADDNSLLFMETSAKTSMNVNEIFMAIAKKLPKNEPQNPGINCTRGRGVDLTEPTQPTRSQCCSN.

Residues Ser29, Ala30, Gly32, Lys33, Ser34, Ser35, His46, Glu47, Thr52, and Gly78 each coordinate GTP. Ser34 is a binding site for Mg(2+). 2 consecutive short sequence motifs (switch) follow at residues 44–56 (QFHE…IGAA) and 77–93 (AGQE…YRGA). A Mg(2+)-binding site is contributed by Thr52. At Ser84 the chain carries Phosphoserine. The GTP site is built by Asn133, Lys134, Asp136, Ala164, and Lys165. The interval 185–215 (EPQNPGINCTRGRGVDLTEPTQPTRSQCCSN) is disordered. A compositionally biased stretch (polar residues) spans 203 to 215 (EPTQPTRSQCCSN). Residues Cys212 and Cys213 are each lipidated (S-geranylgeranyl cysteine).

The protein belongs to the small GTPase superfamily. Rab family. In terms of assembly, interacts with GDI1; this promotes dissociation from membranes; phosphorylation at Ser-84 disrupts this interaction. Interacts with GDI2; phosphorylation at Ser-84 disrupts the interaction. Interacts with SGSM1 and SGSM3. Interacts with PIK3CB. Interacts with RIN1 and GAPVD1, which regulate its pathway, probably by acting as a GEF. Interacts with RINL. Interacts with ALS2CL, SUN2, ZFYVE20 and RUFY1. Interacts with RABEP1; one RABEP1 homodimer binds two RAB5A chains, but at opposite sides of the dimer. Interacts with OCRL and INPP5F. May be a component of a complex composed of RAB5A, DYN2 and PIK3C3. Does not interact with the BLOC-3 complex (heterodimer of HPS1 and HPS4). Interacts with CLN5. Interacts with APPL2. Interacts with F8A1/F8A2/F8A3. Found in a complex with F8A1/F8A2/F8A3, HTT and RAB5A; mediates the recruitment of HTT by RAB5A onto early endosomes. Interacts with ATP9A. Interacts with PPP1R21; mediates the recruitment of FERRY complex by RAB5A onto early endosomes. It depends on Mg(2+) as a cofactor. Phosphorylation of Ser-84 in the switch II region by LRRK2 prevents the association of RAB regulatory proteins, including RAB GDP dissociation inhibitors GDI1 and GDI2.

Its subcellular location is the cell membrane. It localises to the early endosome membrane. The protein resides in the melanosome. It is found in the cytoplasmic vesicle. The protein localises to the cell projection. Its subcellular location is the ruffle. It localises to the membrane. The protein resides in the cytoplasm. It is found in the cytosol. The protein localises to the phagosome membrane. Its subcellular location is the endosome membrane. It catalyses the reaction GTP + H2O = GDP + phosphate + H(+). Its activity is regulated as follows. Regulated by guanine nucleotide exchange factors (GEFs) including RINL, which promote the exchange of bound GDP for free GTP. Regulated by GTPase activating proteins (GAPs) which increase the GTP hydrolysis activity. Inhibited by GDP dissociation inhibitors (GDIs). In terms of biological role, the small GTPases Rab are key regulators of intracellular membrane trafficking, from the formation of transport vesicles to their fusion with membranes. Rabs cycle between an inactive GDP-bound form and an active GTP-bound form that is able to recruit to membranes different sets of downstream effectors directly responsible for vesicle formation, movement, tethering and fusion. RAB5A is required for the fusion of plasma membranes and early endosomes. Contributes to the regulation of filopodia extension. Required for the exosomal release of SDCBP, CD63, PDCD6IP and syndecan. Regulates maturation of apoptotic cell-containing phagosomes, probably downstream of DYN2 and PIK3C3. The protein is Ras-related protein Rab-5A (RAB5A) of Sus scrofa (Pig).